The chain runs to 398 residues: Trans-2-enoyl-CoA reductase [NADH] (398 aa).

NAD(+) contacts are provided by residues 47–52 (GASSGF), 74–75 (FE), 111–112 (DA), and 139–140 (LA). Tyr-225 is a substrate binding site. Tyr-235 acts as the Proton donor in catalysis. Residues Lys-244 and 274–276 (IVT) contribute to the NAD(+) site.

This sequence belongs to the TER reductase family. As to quaternary structure, monomer.

It catalyses the reaction a 2,3-saturated acyl-CoA + NAD(+) = a (2E)-enoyl-CoA + NADH + H(+). Its pathway is lipid metabolism; fatty acid biosynthesis. Its function is as follows. Involved in the fatty acid synthesis (FAS II). Catalyzes the reduction of a carbon-carbon double bond in an enoyl moiety that is covalently linked to a coenzyme A (CoA). The protein is Trans-2-enoyl-CoA reductase [NADH] of Clostridium beijerinckii (strain ATCC 51743 / NCIMB 8052) (Clostridium acetobutylicum).